The primary structure comprises 443 residues: Serine/threonine-protein phosphatase 2A 55 kDa regulatory subunit B beta isoform (443 aa).

WD repeat units lie at residues 22 to 61 (TEAD…KNQV), 87 to 128 (EIEE…KRPE), 171 to 209 (AHTY…QSFN), and 220 to 260 (ELTE…LCDR). S275 carries the phosphoserine modification. WD repeat units lie at residues 279–317 (EIIS…RPVE), 334–375 (ENDC…DVTL), and 410–442 (DFSK…QDKV). Y295 carries the phosphotyrosine modification. Residue T298 is modified to Phosphothreonine.

It belongs to the phosphatase 2A regulatory subunit B family. PP2A consists of a common heterodimeric core enzyme, composed of a 36 kDa catalytic subunit (subunit C) and a 65 kDa constant regulatory subunit (PR65 or subunit A), that associates with a variety of regulatory subunits. Proteins that associate with the core dimer include three families of regulatory subunits B (the R2/B/PR55/B55, R3/B''/PR72/PR130/PR59 and R5/B'/B56 families), the 48 kDa variable regulatory subunit, viral proteins, and cell signaling molecules. Interacts with IER5 (via N- and C-terminal regions). Interacts with TOMM22. In terms of tissue distribution, expressed in the brain. Isoform 1 and isoform 2 are expressed in the forbrain. Isoform 1 is more strongly expressed than isoform 2 in the olfactory bulb. Isoform 1 and isoform 2 are weakly expressed in the cerebellum. Isoform 1 is expressed in the testis. Isoform 2 expression is undetectable at birth rising to adult level at day 14.

It localises to the cytoplasm. The protein localises to the cytoskeleton. Its subcellular location is the membrane. The protein resides in the mitochondrion. It is found in the mitochondrion outer membrane. In terms of biological role, the B regulatory subunit might modulate substrate selectivity and catalytic activity, and might also direct the localization of the catalytic enzyme to a particular subcellular compartment. Within the PP2A holoenzyme complex, isoform 2 is required to promote proapoptotic activity. Isoform 2 regulates neuronal survival through the mitochondrial fission and fusion balance. The chain is Serine/threonine-protein phosphatase 2A 55 kDa regulatory subunit B beta isoform (Ppp2r2b) from Rattus norvegicus (Rat).